Reading from the N-terminus, the 284-residue chain is NAD kinase (284 aa).

The active-site Proton acceptor is D65. Residues D65–G66, N139–D140, R150, R167, D169, and Q239 contribute to the NAD(+) site.

The protein belongs to the NAD kinase family. A divalent metal cation serves as cofactor.

It is found in the cytoplasm. It carries out the reaction NAD(+) + ATP = ADP + NADP(+) + H(+). In terms of biological role, involved in the regulation of the intracellular balance of NAD and NADP, and is a key enzyme in the biosynthesis of NADP. Catalyzes specifically the phosphorylation on 2'-hydroxyl of the adenosine moiety of NAD to yield NADP. The protein is NAD kinase of Desulfatibacillum aliphaticivorans.